Reading from the N-terminus, the 316-residue chain is D-alanine--D-alanine ligase (316 aa).

In terms of domain architecture, ATP-grasp spans 107–303 (KEVFAARGLT…FEDLVERILI (197 aa)). 133–188 (AEGFGYPVVVKPSQEGSSVGVSIVKSPEELPSALELAFRYDDDILVERFIKGREIQ) contacts ATP. Positions 256, 269, and 271 each coordinate Mg(2+).

The protein belongs to the D-alanine--D-alanine ligase family. Mg(2+) serves as cofactor. Mn(2+) is required as a cofactor.

The protein localises to the cytoplasm. The enzyme catalyses 2 D-alanine + ATP = D-alanyl-D-alanine + ADP + phosphate + H(+). It functions in the pathway cell wall biogenesis; peptidoglycan biosynthesis. Its function is as follows. Cell wall formation. The protein is D-alanine--D-alanine ligase of Geobacter sulfurreducens (strain ATCC 51573 / DSM 12127 / PCA).